The chain runs to 252 residues: Trans-aconitate 2-methyltransferase (252 aa).

The protein belongs to the methyltransferase superfamily. Tam family.

It localises to the cytoplasm. It carries out the reaction trans-aconitate + S-adenosyl-L-methionine = (E)-3-(methoxycarbonyl)pent-2-enedioate + S-adenosyl-L-homocysteine. Its function is as follows. Catalyzes the S-adenosylmethionine monomethyl esterification of trans-aconitate. In Escherichia fergusonii (strain ATCC 35469 / DSM 13698 / CCUG 18766 / IAM 14443 / JCM 21226 / LMG 7866 / NBRC 102419 / NCTC 12128 / CDC 0568-73), this protein is Trans-aconitate 2-methyltransferase.